The sequence spans 319 residues: G-protein coupled receptor 171 (319 aa).

Topologically, residues 1–21 (MTNSSTFCPVYRDLEPFTYFF) are extracellular. The N-linked (GlcNAc...) asparagine glycan is linked to N3. Residues 22-42 (YLVFLIGIIGSCFATWAFIQK) form a helical membrane-spanning segment. Residues 43–48 (TTNHRC) are Cytoplasmic-facing. The chain crosses the membrane as a helical span at residues 49–69 (VSIYLINLLTADFLLTLALPV). The Extracellular portion of the chain corresponds to 70 to 89 (KIIVDLGVAPWKLRIFHCQV). A helical membrane pass occupies residues 90–110 (TACLIYINMYLSIIFLAFVSI). Residues 111–132 (DRCLQLIHSCKIYRIQEPGFAK) are Cytoplasmic-facing. Residues 133-153 (MISAVVWLMVLLIMVPNMVIP) form a helical membrane-spanning segment. At 154–181 (IKDIKEKSNVGCMEFKKEFGRNWHLLTN) the chain is on the extracellular side. Residues 182 to 202 (FICVAIFLNFSVIILISNFLA) traverse the membrane as a helical segment. The Cytoplasmic portion of the chain corresponds to 203 to 224 (IRQLYRNRDNTNYPSVKSALLH). Residues 225–245 (ILLVTASYIICFVPYHAVRIP) traverse the membrane as a helical segment. Topologically, residues 246–268 (YTLSQTEVISDCSTRIALFKAKE) are extracellular. The helical transmembrane segment at 269–289 (ATLLLAVSNLCFDPILYYHLS) threads the bilayer. Residues 290 to 319 (KAFRLKVTETFASPKKSKPLEERLRSENDV) are Cytoplasmic-facing.

The protein belongs to the G-protein coupled receptor 1 family. In terms of tissue distribution, highly expressed in hypothalamus, including the arcuate nucleus, paraventricular nucleus and dorsomedial hypothalamus. Expressed in periaqueductal gray (at protein level), found primarily in GABAergic neurons and to a lesser extent in glutamatergic neurons. Expressed in T cells and natural killer cells.

The protein localises to the cell membrane. G-protein coupled receptor for Big LEN, a 16-amino acid neuropeptide produced from the precursor protein, proSAAS (encoded by PCSK1N). Acts through a G(i)-alpha-mediated pathway in response to Big LEN. Big LEN-GPR171 system plays an important role in regulating feeding and metabolism. Also plays a role in modulating fear and anxiety-like behaviors in the basolateral amygdala. Big LEN-GPR171 modulates the mu-type opioid receptor signaling and antinociception. Acts as a negative regulator T cell function. The chain is G-protein coupled receptor 171 (Gpr171) from Mus musculus (Mouse).